The chain runs to 397 residues: ATP phosphoribosyltransferase regulatory subunit (397 aa).

This sequence belongs to the class-II aminoacyl-tRNA synthetase family. HisZ subfamily. Heteromultimer composed of HisG and HisZ subunits.

The protein resides in the cytoplasm. It functions in the pathway amino-acid biosynthesis; L-histidine biosynthesis; L-histidine from 5-phospho-alpha-D-ribose 1-diphosphate: step 1/9. Required for the first step of histidine biosynthesis. May allow the feedback regulation of ATP phosphoribosyltransferase activity by histidine. This is ATP phosphoribosyltransferase regulatory subunit from Halalkalibacterium halodurans (strain ATCC BAA-125 / DSM 18197 / FERM 7344 / JCM 9153 / C-125) (Bacillus halodurans).